The following is a 491-amino-acid chain: MANYFNTLTFIEKLKHLGKCRFMSNNEFSNGIQALLSKKVAIIGCGSQGLNQGLNMRDSGVNITYALRRESILNKQESWARATRNGFPVGTYDEIIPKSDVVINLTPDKCHTSVIRQIEPLMKHGSTLGYSHGFHIVEVGEKIRQDITVIMVAPKCPGTEVRQEYQRGFGVPALIAVHEENDTYDMGMTLAKSWAFALGSHRAGVLESSFVAEVKSDLMGEQTILCGMLQAGSILCFDYMISNGVNAAYAGKFIQCGWEVITEALKQGGITLMMDRLSNASKIRAFILSEKLKNILKPVFEKHMENILNGVFSKEMMLDWENNDSKLLKWREKTSQLPLEQAPNYQQEILEQTYFDYGILMVAIIKSGIELSFDTMIKSGIAPESAYYESLHELPLIANTIARKKLYEMNMVISDTAEYGNYLFCDKVVPLLKKTIIPNLRTGDLGMSPKNVNVDNIVLRNTNDMIRNHTIEKVGIQLRSYMQNMKSLSFN.

The region spanning 14–208 (LKHLGKCRFM…GSHRAGVLES (195 aa)) is the KARI N-terminal Rossmann domain. NADP(+) contacts are provided by residues 45–48 (CGSQ), arginine 68, and serine 78. Histidine 132 is an active-site residue. Glycine 158 is an NADP(+) binding site. 2 KARI C-terminal knotted domains span residues 209-344 (SFVA…QAPN) and 345-485 (YQQE…MQNM). Residues aspartate 217, glutamate 221, glutamate 389, and glutamate 393 each coordinate Mg(2+). Serine 414 is a substrate binding site.

Belongs to the ketol-acid reductoisomerase family. Mg(2+) is required as a cofactor.

The catalysed reaction is (2R)-2,3-dihydroxy-3-methylbutanoate + NADP(+) = (2S)-2-acetolactate + NADPH + H(+). It catalyses the reaction (2R,3R)-2,3-dihydroxy-3-methylpentanoate + NADP(+) = (S)-2-ethyl-2-hydroxy-3-oxobutanoate + NADPH + H(+). Its pathway is amino-acid biosynthesis; L-isoleucine biosynthesis; L-isoleucine from 2-oxobutanoate: step 2/4. It functions in the pathway amino-acid biosynthesis; L-valine biosynthesis; L-valine from pyruvate: step 2/4. Its function is as follows. Involved in the biosynthesis of branched-chain amino acids (BCAA). Catalyzes an alkyl-migration followed by a ketol-acid reduction of (S)-2-acetolactate (S2AL) to yield (R)-2,3-dihydroxy-isovalerate. In the isomerase reaction, S2AL is rearranged via a Mg-dependent methyl migration to produce 3-hydroxy-3-methyl-2-ketobutyrate (HMKB). In the reductase reaction, this 2-ketoacid undergoes a metal-dependent reduction by NADPH to yield (R)-2,3-dihydroxy-isovalerate. This Blochmanniella pennsylvanica (strain BPEN) protein is Ketol-acid reductoisomerase (NADP(+)).